The primary structure comprises 138 residues: Putative pre-16S rRNA nuclease (138 aa).

Belongs to the YqgF nuclease family.

It is found in the cytoplasm. Its function is as follows. Could be a nuclease involved in processing of the 5'-end of pre-16S rRNA. This chain is Putative pre-16S rRNA nuclease, found in Glaesserella parasuis serovar 5 (strain SH0165) (Haemophilus parasuis).